Reading from the N-terminus, the 95-residue chain is Integration host factor subunit beta (95 aa).

It belongs to the bacterial histone-like protein family. In terms of assembly, heterodimer of an alpha and a beta chain.

Functionally, this protein is one of the two subunits of integration host factor, a specific DNA-binding protein that functions in genetic recombination as well as in transcriptional and translational control. This chain is Integration host factor subunit beta, found in Colwellia psychrerythraea (strain 34H / ATCC BAA-681) (Vibrio psychroerythus).